The sequence spans 210 residues: Guanylate kinase (210 aa).

One can recognise a Guanylate kinase-like domain in the interval 23–203 (GRVVVLSGPS…ACAELVSLLV (181 aa)). 30 to 37 (GPSAVGKS) serves as a coordination point for ATP.

The protein belongs to the guanylate kinase family.

It localises to the cytoplasm. It catalyses the reaction GMP + ATP = GDP + ADP. Essential for recycling GMP and indirectly, cGMP. This is Guanylate kinase (gmk) from Mycobacterium leprae (strain TN).